Here is a 254-residue protein sequence, read N- to C-terminus: Adenosine 5'-phosphosulfate reductase (254 aa).

Positions 140, 141, 223, and 226 each coordinate [4Fe-4S] cluster. The active-site Nucleophile; cysteine thiosulfonate intermediate is cysteine 249.

It belongs to the PAPS reductase family. CysH subfamily. [4Fe-4S] cluster serves as cofactor.

Its subcellular location is the cytoplasm. The catalysed reaction is [thioredoxin]-disulfide + sulfite + AMP + 2 H(+) = adenosine 5'-phosphosulfate + [thioredoxin]-dithiol. Its pathway is sulfur metabolism; hydrogen sulfide biosynthesis; sulfite from sulfate. Catalyzes the formation of sulfite from adenosine 5'-phosphosulfate (APS) using thioredoxin as an electron donor. The chain is Adenosine 5'-phosphosulfate reductase from Mycobacterium bovis (strain ATCC BAA-935 / AF2122/97).